The following is a 446-amino-acid chain: Tetratricopeptide repeat protein 23 (446 aa).

TPR repeat units follow at residues 45-78, 137-170, 186-219, and 356-389; these read LHLC…TKIC, LELF…SKEM, SRIK…TETT, and AETY…ETFL.

Associated with the EvC complex composed of EFCAB7, IQCE, EVC2 and EVC.

Its subcellular location is the cell projection. The protein resides in the cilium. Functionally, participates positively in the ciliary Hedgehog (Hh) signaling. The polypeptide is Tetratricopeptide repeat protein 23 (Ttc23) (Rattus norvegicus (Rat)).